Reading from the N-terminus, the 90-residue chain is Acylphosphatase (90 aa).

The Acylphosphatase-like domain occupies 5–90 (SFVVHVWGQV…PPQKGGFHTN (86 aa)). Residues R20 and N38 contribute to the active site.

It belongs to the acylphosphatase family.

The catalysed reaction is an acyl phosphate + H2O = a carboxylate + phosphate + H(+). This is Acylphosphatase (acyP) from Aeromonas salmonicida (strain A449).